Reading from the N-terminus, the 745-residue chain is MRFGKEFVSQMIPEWQEAYIDYAYLKTILQDIQASRNRSDSNNQSSTPSFARNLTRRYNRDALVSENHDIVVNTVTRLEEGLETAAYETTFLKAGEAGGDFEVTFFRTLDREFNKVNNFYRLKVETARTEALALNKQMDALIAFRHKVMDQNQKNPSVFDSVSEDINGSASEVGSSSKCTEHNVALADLMRNEDTSNESILERIRMNKTREITPLSAIKTILKVHKQDELKFTRDNLKEVEKRLQVAFIEFYQKLRHLKNYSFLNASAVSKIMKKYDKIAKRNAAKLYMEMVDKSFLSSSEEVHKLLLKVESIFIEHFSNSNRREGMSHLRPKINKERHLITFSTGFFFGCGISLIVALGLIIHARNIMGTPGQRTYMETMFPLYRFFGFVVLHMDVYAANIYFWRRYRVNYSFIFGFKQGTELGYRHVLLLSFGLGTLSLCAVLLNLDMEMDAQTKDYRLVTELIPLFLLVLVIIIVLCPFNILYRSSRFFFLSVLFRCIAAPFYAVHLPDFFLGDQLTSQVQALRSLEFYICYYGFGDFRYRRRNTCTSNIGFRTFYFIVAVIPYWLRFLQCIRRMVEDRDLSHGYNGIKYLLTIVAASLRTAYTLNRGSNWNITAWVFSGVATFYGTYWDIVLDWGLLQRGCKNSFLRDKLLVPHKTVYYAAMVLNVLLRLVWLQTVLDLKFSFLHRETMVALMACLEIIRRGIWNFFRLENEHLNNVGRYRAFKTVPLPFNYEEDGDHHNN.

An SPX domain is found at 1–290 (MRFGKEFVSQ…KRNAAKLYME (290 aa)). Topologically, residues 1–342 (MRFGKEFVSQ…KINKERHLIT (342 aa)) are cytoplasmic. Residues 343-363 (FSTGFFFGCGISLIVALGLII) traverse the membrane as a helical segment. Topologically, residues 364 to 383 (HARNIMGTPGQRTYMETMFP) are extracellular. Residues 384 to 404 (LYRFFGFVVLHMDVYAANIYF) form a helical membrane-spanning segment. Topologically, residues 405–427 (WRRYRVNYSFIFGFKQGTELGYR) are cytoplasmic. The helical transmembrane segment at 428–448 (HVLLLSFGLGTLSLCAVLLNL) threads the bilayer. Over 449–464 (DMEMDAQTKDYRLVTE) the chain is Extracellular. A helical membrane pass occupies residues 465-485 (LIPLFLLVLVIIIVLCPFNIL). The Cytoplasmic portion of the chain corresponds to 486–615 (YRSSRFFFLS…YTLNRGSNWN (130 aa)). The 195-residue stretch at 550–744 (TSNIGFRTFY…NYEEDGDHHN (195 aa)) folds into the EXS domain. The helical transmembrane segment at 616–636 (ITAWVFSGVATFYGTYWDIVL) threads the bilayer. The Extracellular portion of the chain corresponds to 637 to 660 (DWGLLQRGCKNSFLRDKLLVPHKT). The chain crosses the membrane as a helical span at residues 661–681 (VYYAAMVLNVLLRLVWLQTVL). The Cytoplasmic portion of the chain corresponds to 682 to 745 (DLKFSFLHRE…YEEDGDHHNN (64 aa)).

It belongs to the SYG1 (TC 2.A.94) family. In terms of tissue distribution, expressed in root epidermis and cortex, leaf hydathodes, pollen grains and stigma apex.

The protein resides in the cell membrane. Functionally, may transport inorganic phosphate (Pi). This Arabidopsis thaliana (Mouse-ear cress) protein is Phosphate transporter PHO1 homolog 4 (PHO1-H4).